The primary structure comprises 417 residues: NADH-quinone oxidoreductase subunit D 1 (417 aa).

Belongs to the complex I 49 kDa subunit family. NDH-1 is composed of 14 different subunits. Subunits NuoB, C, D, E, F, and G constitute the peripheral sector of the complex.

The protein localises to the cell membrane. It catalyses the reaction a quinone + NADH + 5 H(+)(in) = a quinol + NAD(+) + 4 H(+)(out). Its function is as follows. NDH-1 shuttles electrons from NADH, via FMN and iron-sulfur (Fe-S) centers, to quinones in the respiratory chain. The immediate electron acceptor for the enzyme in this species is believed to be ubiquinone. Couples the redox reaction to proton translocation (for every two electrons transferred, four hydrogen ions are translocated across the cytoplasmic membrane), and thus conserves the redox energy in a proton gradient. This is NADH-quinone oxidoreductase subunit D 1 from Roseiflexus castenholzii (strain DSM 13941 / HLO8).